A 63-amino-acid chain; its full sequence is Cytochrome c oxidase subunit 7C, mitochondrial (63 aa).

The transit peptide at 1 to 16 directs the protein to the mitochondrion; that stretch reads MLGQSIRRFTTSVVRR. Residues 17–33 lie on the Mitochondrial matrix side of the membrane; it reads SHYEEGPGKNLPFSVEN. At Lys-25 the chain carries N6-acetyllysine; alternate. At Lys-25 the chain carries N6-succinyllysine; alternate. A helical transmembrane segment spans residues 34 to 60; it reads KWRLLAMMTLYFGSGFAAPFFIVRHQL. Residues 61–63 lie on the Mitochondrial intermembrane side of the membrane; the sequence is LKK.

The protein belongs to the cytochrome c oxidase VIIc family. As to quaternary structure, component of the cytochrome c oxidase (complex IV, CIV), a multisubunit enzyme composed of 14 subunits. The complex is composed of a catalytic core of 3 subunits MT-CO1, MT-CO2 and MT-CO3, encoded in the mitochondrial DNA, and 11 supernumerary subunits COX4I, COX5A, COX5B, COX6A, COX6B, COX6C, COX7A, COX7B, COX7C, COX8 and NDUFA4, which are encoded in the nuclear genome. The complex exists as a monomer or a dimer and forms supercomplexes (SCs) in the inner mitochondrial membrane with NADH-ubiquinone oxidoreductase (complex I, CI) and ubiquinol-cytochrome c oxidoreductase (cytochrome b-c1 complex, complex III, CIII), resulting in different assemblies (supercomplex SCI(1)III(2)IV(1) and megacomplex MCI(2)III(2)IV(2)). Interacts with RAB5IF.

Its subcellular location is the mitochondrion inner membrane. It participates in energy metabolism; oxidative phosphorylation. Functionally, component of the cytochrome c oxidase, the last enzyme in the mitochondrial electron transport chain which drives oxidative phosphorylation. The respiratory chain contains 3 multisubunit complexes succinate dehydrogenase (complex II, CII), ubiquinol-cytochrome c oxidoreductase (cytochrome b-c1 complex, complex III, CIII) and cytochrome c oxidase (complex IV, CIV), that cooperate to transfer electrons derived from NADH and succinate to molecular oxygen, creating an electrochemical gradient over the inner membrane that drives transmembrane transport and the ATP synthase. Cytochrome c oxidase is the component of the respiratory chain that catalyzes the reduction of oxygen to water. Electrons originating from reduced cytochrome c in the intermembrane space (IMS) are transferred via the dinuclear copper A center (CU(A)) of subunit 2 and heme A of subunit 1 to the active site in subunit 1, a binuclear center (BNC) formed by heme A3 and copper B (CU(B)). The BNC reduces molecular oxygen to 2 water molecules using 4 electrons from cytochrome c in the IMS and 4 protons from the mitochondrial matrix. The protein is Cytochrome c oxidase subunit 7C, mitochondrial (COX7C) of Sus scrofa (Pig).